A 254-amino-acid chain; its full sequence is Leucyl/phenylalanyl-tRNA--protein transferase (254 aa).

It belongs to the L/F-transferase family.

The protein localises to the cytoplasm. The enzyme catalyses N-terminal L-lysyl-[protein] + L-leucyl-tRNA(Leu) = N-terminal L-leucyl-L-lysyl-[protein] + tRNA(Leu) + H(+). The catalysed reaction is N-terminal L-arginyl-[protein] + L-leucyl-tRNA(Leu) = N-terminal L-leucyl-L-arginyl-[protein] + tRNA(Leu) + H(+). It catalyses the reaction L-phenylalanyl-tRNA(Phe) + an N-terminal L-alpha-aminoacyl-[protein] = an N-terminal L-phenylalanyl-L-alpha-aminoacyl-[protein] + tRNA(Phe). Functionally, functions in the N-end rule pathway of protein degradation where it conjugates Leu, Phe and, less efficiently, Met from aminoacyl-tRNAs to the N-termini of proteins containing an N-terminal arginine or lysine. In Bordetella bronchiseptica (strain ATCC BAA-588 / NCTC 13252 / RB50) (Alcaligenes bronchisepticus), this protein is Leucyl/phenylalanyl-tRNA--protein transferase.